We begin with the raw amino-acid sequence, 251 residues long: Ubiquinone/menaquinone biosynthesis C-methyltransferase UbiE (251 aa).

Residues T74, D95, and 123-124 contribute to the S-adenosyl-L-methionine site; that span reads DA.

The protein belongs to the class I-like SAM-binding methyltransferase superfamily. MenG/UbiE family.

The catalysed reaction is a 2-demethylmenaquinol + S-adenosyl-L-methionine = a menaquinol + S-adenosyl-L-homocysteine + H(+). It catalyses the reaction a 2-methoxy-6-(all-trans-polyprenyl)benzene-1,4-diol + S-adenosyl-L-methionine = a 5-methoxy-2-methyl-3-(all-trans-polyprenyl)benzene-1,4-diol + S-adenosyl-L-homocysteine + H(+). The protein operates within quinol/quinone metabolism; menaquinone biosynthesis; menaquinol from 1,4-dihydroxy-2-naphthoate: step 2/2. Its pathway is cofactor biosynthesis; ubiquinone biosynthesis. Functionally, methyltransferase required for the conversion of demethylmenaquinol (DMKH2) to menaquinol (MKH2) and the conversion of 2-polyprenyl-6-methoxy-1,4-benzoquinol (DDMQH2) to 2-polyprenyl-3-methyl-6-methoxy-1,4-benzoquinol (DMQH2). This is Ubiquinone/menaquinone biosynthesis C-methyltransferase UbiE from Idiomarina loihiensis (strain ATCC BAA-735 / DSM 15497 / L2-TR).